Reading from the N-terminus, the 169-residue chain is Der GTPase-activating protein YihI (169 aa).

Disordered regions lie at residues 1–98 (MKPS…PQAE) and 144–169 (GLSYDDDEEEEEDEKQEDMMRLLRGN). Residues 10–19 (SKGHAKARRK) are compositionally biased toward basic residues. Residues 20–30 (TREELDQEARD) show a composition bias toward basic and acidic residues. Basic residues predominate over residues 31-40 (RKRLKKRRGH). Residues 49 to 58 (GNTTSGSKGQ) show a composition bias toward polar residues. A compositionally biased stretch (acidic residues) spans 147 to 159 (YDDDEEEEEDEKQ). A compositionally biased stretch (basic and acidic residues) spans 160–169 (EDMMRLLRGN).

This sequence belongs to the YihI family. Interacts with Der.

Functionally, a GTPase-activating protein (GAP) that modifies Der/EngA GTPase function. May play a role in ribosome biogenesis. This is Der GTPase-activating protein YihI from Escherichia coli O6:K15:H31 (strain 536 / UPEC).